A 127-amino-acid polypeptide reads, in one-letter code: Fluoride-specific ion channel FluC (127 aa).

Helical transmembrane passes span 2 to 22 (LSSL…RWAI), 35 to 55 (LGTL…IAIF), 68 to 88 (LITT…LEVV), and 104 to 124 (LLNL…VVWI). Positions 75 and 78 each coordinate Na(+).

Belongs to the fluoride channel Fluc/FEX (TC 1.A.43) family.

The protein localises to the cell inner membrane. It catalyses the reaction fluoride(in) = fluoride(out). Its activity is regulated as follows. Na(+) is not transported, but it plays an essential structural role and its presence is essential for fluoride channel function. Functionally, fluoride-specific ion channel. Important for reducing fluoride concentration in the cell, thus reducing its toxicity. The chain is Fluoride-specific ion channel FluC from Serratia proteamaculans (strain 568).